Here is a 227-residue protein sequence, read N- to C-terminus: Cytochrome c oxidase subunit 2 (227 aa).

Topologically, residues 1 to 14 are mitochondrial intermembrane; that stretch reads MAYPFQLGLQDASS. A helical membrane pass occupies residues 15–45; sequence PIMEELTNFHDHTLMIVFLISSLVLYIISSM. Over 46 to 59 the chain is Mitochondrial matrix; that stretch reads LTTKMTHTSTMDAQ. A helical membrane pass occupies residues 60–87; the sequence is EVETIWTVLPAVILILIALPSLRILYMM. The Mitochondrial intermembrane portion of the chain corresponds to 88–227; it reads DEINNPVLTV…HFENWSTSMI (140 aa). Residues H161, C196, E198, C200, H204, and M207 each contribute to the Cu cation site. E198 contributes to the Mg(2+) binding site.

This sequence belongs to the cytochrome c oxidase subunit 2 family. In terms of assembly, component of the cytochrome c oxidase (complex IV, CIV), a multisubunit enzyme composed of 14 subunits. The complex is composed of a catalytic core of 3 subunits MT-CO1, MT-CO2 and MT-CO3, encoded in the mitochondrial DNA, and 11 supernumerary subunits COX4I, COX5A, COX5B, COX6A, COX6B, COX6C, COX7A, COX7B, COX7C, COX8 and NDUFA4, which are encoded in the nuclear genome. The complex exists as a monomer or a dimer and forms supercomplexes (SCs) in the inner mitochondrial membrane with NADH-ubiquinone oxidoreductase (complex I, CI) and ubiquinol-cytochrome c oxidoreductase (cytochrome b-c1 complex, complex III, CIII), resulting in different assemblies (supercomplex SCI(1)III(2)IV(1) and megacomplex MCI(2)III(2)IV(2)). Found in a complex with TMEM177, COA6, COX18, COX20, SCO1 and SCO2. Interacts with TMEM177 in a COX20-dependent manner. Interacts with COX20. Interacts with COX16. It depends on Cu cation as a cofactor.

It localises to the mitochondrion inner membrane. The enzyme catalyses 4 Fe(II)-[cytochrome c] + O2 + 8 H(+)(in) = 4 Fe(III)-[cytochrome c] + 2 H2O + 4 H(+)(out). Its function is as follows. Component of the cytochrome c oxidase, the last enzyme in the mitochondrial electron transport chain which drives oxidative phosphorylation. The respiratory chain contains 3 multisubunit complexes succinate dehydrogenase (complex II, CII), ubiquinol-cytochrome c oxidoreductase (cytochrome b-c1 complex, complex III, CIII) and cytochrome c oxidase (complex IV, CIV), that cooperate to transfer electrons derived from NADH and succinate to molecular oxygen, creating an electrochemical gradient over the inner membrane that drives transmembrane transport and the ATP synthase. Cytochrome c oxidase is the component of the respiratory chain that catalyzes the reduction of oxygen to water. Electrons originating from reduced cytochrome c in the intermembrane space (IMS) are transferred via the dinuclear copper A center (CU(A)) of subunit 2 and heme A of subunit 1 to the active site in subunit 1, a binuclear center (BNC) formed by heme A3 and copper B (CU(B)). The BNC reduces molecular oxygen to 2 water molecules using 4 electrons from cytochrome c in the IMS and 4 protons from the mitochondrial matrix. The polypeptide is Cytochrome c oxidase subunit 2 (MT-CO2) (Lophuromys flavopunctatus (Yellow-spotted brush-furred rat)).